Here is a 313-residue protein sequence, read N- to C-terminus: Formimidoylglutamase (313 aa).

Mn(2+)-binding residues include His-130, Asp-155, His-157, Asp-159, Asp-241, and Asp-243.

It belongs to the arginase family. Mn(2+) is required as a cofactor.

It catalyses the reaction N-formimidoyl-L-glutamate + H2O = formamide + L-glutamate. It functions in the pathway amino-acid degradation; L-histidine degradation into L-glutamate; L-glutamate from N-formimidoyl-L-glutamate (hydrolase route): step 1/1. Catalyzes the conversion of N-formimidoyl-L-glutamate to L-glutamate and formamide. The polypeptide is Formimidoylglutamase (Salmonella paratyphi B (strain ATCC BAA-1250 / SPB7)).